The primary structure comprises 87 residues: Conotoxin Bt15a (87 aa).

The signal sequence occupies residues 1–23 (MEKLTILVLVATVLLAIQVLVQS). The propeptide occupies 24-49 (DGEKPLKRRVKQYAAKRLSALMRGPR). Gln50 bears the Pyrrolidone carboxylic acid mark.

Belongs to the conotoxin O2 superfamily. Post-translationally, contains 4 disulfide bonds. In terms of tissue distribution, expressed by the venom duct.

The protein localises to the secreted. The sequence is that of Conotoxin Bt15a from Conus betulinus (Beech cone).